The chain runs to 270 residues: UPF0354 protein BT9727_4425 (270 aa).

This sequence belongs to the UPF0354 family.

The sequence is that of UPF0354 protein BT9727_4425 from Bacillus thuringiensis subsp. konkukian (strain 97-27).